We begin with the raw amino-acid sequence, 257 residues long: Phosphonates import ATP-binding protein PhnC (257 aa).

One can recognise an ABC transporter domain in the interval 2-246; sequence IEFRNVSKVY…KFAEIYGDVA (245 aa). Position 35–42 (35–42) interacts with ATP; that stretch reads GLSGAGKS.

The protein belongs to the ABC transporter superfamily. Phosphonates importer (TC 3.A.1.9.1) family. As to quaternary structure, the complex is composed of two ATP-binding proteins (PhnC), two transmembrane proteins (PhnE) and a solute-binding protein (PhnD).

It localises to the cell membrane. The catalysed reaction is phosphonate(out) + ATP + H2O = phosphonate(in) + ADP + phosphate + H(+). Its function is as follows. Part of the ABC transporter complex PhnCDE involved in phosphonates import. Responsible for energy coupling to the transport system. This is Phosphonates import ATP-binding protein PhnC from Bacillus thuringiensis subsp. konkukian (strain 97-27).